The primary structure comprises 208 residues: Protein-L-isoaspartate O-methyltransferase (208 aa).

The active site involves serine 59.

The protein belongs to the methyltransferase superfamily. L-isoaspartyl/D-aspartyl protein methyltransferase family.

Its subcellular location is the cytoplasm. The enzyme catalyses [protein]-L-isoaspartate + S-adenosyl-L-methionine = [protein]-L-isoaspartate alpha-methyl ester + S-adenosyl-L-homocysteine. Its function is as follows. Catalyzes the methyl esterification of L-isoaspartyl residues in peptides and proteins that result from spontaneous decomposition of normal L-aspartyl and L-asparaginyl residues. It plays a role in the repair and/or degradation of damaged proteins. This Salmonella arizonae (strain ATCC BAA-731 / CDC346-86 / RSK2980) protein is Protein-L-isoaspartate O-methyltransferase.